The chain runs to 417 residues: Cobalamin binding intrinsic factor (417 aa).

The signal sequence occupies residues 1–18 (MAWLSFYLLNVLWAVAGT). Cystine bridges form between C26–C246, C103–C288, and C143–C182. A cob(II)alamin-binding site is contributed by D171. S191 carries the post-translational modification Phosphoserine. An N-linked (GlcNAc...) asparagine glycan is attached at N209. The cob(II)alamin site is built by D222 and Q270. 2 N-linked (GlcNAc...) asparagine glycosylation sites follow: N311 and N330. Residues 365–370 (SWGLIV) and 386–395 (WEFLSGKTPL) contribute to the cob(II)alamin site. N413 carries N-linked (GlcNAc...) asparagine glycosylation.

It belongs to the eukaryotic cobalamin transport proteins family. In terms of assembly, interacts with CUBN (via CUB domains). The N-terminus is blocked. Gastric mucosa.

It localises to the secreted. Its function is as follows. Promotes absorption of the essential vitamin cobalamin (Cbl) in the ileum. After interaction with CUBN, the CBLIF-cobalamin complex is internalized via receptor-mediated endocytosis. This is Cobalamin binding intrinsic factor from Rattus norvegicus (Rat).